The chain runs to 206 residues: MARYLGPKLKLSRREGTDLFLKSGVRAIDTKCKIDNAPGVHGARRGRLSEYGVQLREKQKVRRIYGVLEKQFRNYYKEAARLKGNTGENLLQLLEGRLDNVVYRMGFGATRAEARQLVSHKAILVNGKVVNVPSFNVAANDVVAVREKAKKQSRIKAALEVAEQREKPTWIEVDVNTMEGTFKRMPERSDLSADINEQLIVELYSK.

The S4 RNA-binding domain occupies 96–158; sequence GRLDNVVYRM…AKKQSRIKAA (63 aa).

The protein belongs to the universal ribosomal protein uS4 family. As to quaternary structure, part of the 30S ribosomal subunit. Contacts protein S5. The interaction surface between S4 and S5 is involved in control of translational fidelity.

One of the primary rRNA binding proteins, it binds directly to 16S rRNA where it nucleates assembly of the body of the 30S subunit. In terms of biological role, with S5 and S12 plays an important role in translational accuracy. This chain is Small ribosomal subunit protein uS4, found in Vibrio cholerae serotype O1 (strain ATCC 39541 / Classical Ogawa 395 / O395).